The sequence spans 507 residues: Phosphoprotein (507 aa).

The interaction with N0 stretch occupies residues 1 to 48; it reads MAEEQARHVKNGLECIRALKAEPIGSLAIEEAMAAWSEISDNPGQERA. Disordered regions lie at residues 40–100, 134–163, 201–232, 250–273, and 285–309; these read SDNP…PRNL, GLDGDSTLSGGDNESENSDVDIGEPDTEGY, NNFPKLGKTLNVPPPPDPGRASTSGTPIKKGT, GATQCARKSPSEPSGPGAPAGNVP, and WTPESGTTISPRSQNNEEGGDHYDD. Phosphoserine is present on Ser86. Residues 134 to 145 show a composition bias toward low complexity; that stretch reads GLDGDSTLSGGD. The segment covering 146–160 has biased composition (acidic residues); the sequence is NESENSDVDIGEPDT. Ser151 carries the post-translational modification Phosphoserine. Low complexity predominate over residues 260–270; it reads SEPSGPGAPAG. Polar residues predominate over residues 286–301; it reads TPESGTTISPRSQNNE. The segment at 304-376 is multimerization; the sequence is GDHYDDELFS…LSSIMIAIPG (73 aa). Residue Asp314 participates in Ca(2+) binding. Interaction with the L polymerase stretches follow at residues 361 to 377 and 396 to 410; these read STLEGHLSSIMIAIPGL and PIIGRDSGRALAEVL. Residues 457 to 507 form a x domain (XD) region; the sequence is GPASRSVIRSIIKSSRLEEDRKRYLMTLLDDIKGANDLAKFHQMLMKIIMK. The interaction with the nucleocapsid (N-RNA) stretch occupies residues 459 to 507; sequence ASRSVIRSIIKSSRLEEDRKRYLMTLLDDIKGANDLAKFHQMLMKIIMK.

It belongs to the morbillivirus P protein family. As to quaternary structure, homotetramer. Interacts (via multimerization domain and XD domain) with polymerase L; this interaction forms the polymerase L-P complex. Interacts (via N-terminus) with N0 (via Ncore); this interaction allows P to chaperon N0 to avoid N polymerization and non-specific RNA binding before encapsidation. Interacts (via C-terminus) with N-RNA template (via Ntail); this interaction maintains the P/L complex anchored to the nucleocapsid template during the sequential transcription. Interacts (via C-terminus) with protein C this interaction allows C to associate with the ribonucleocapsid. Phosphorylation on serines by host CK2 is necessary for the formation of viral factories.

Essential cofactor of the RNA polymerase L that plays a central role in the transcription and replication by forming the polymerase complex with RNA polymerase L and recruiting L to the genomic N-RNA template for RNA synthesis. Also plays a central role in the encapsidation of nascent RNA chains by forming the encapsidation complex with the nucleocapsid protein N (N-P complex). Acts as a chaperone for newly synthesized free N protein, so-called N0, allowing encapsidation of nascent RNA chains during replication. The nucleoprotein protein N prevents excessive phosphorylation of P, which leads to down-regulation of viral transcription/ replication. Participates, together with N, in the formation of viral factories (viroplasms), which are large inclusions in the host cytoplasm where replication takes place. The sequence is that of Phosphoprotein (P/V) from Measles virus (strain Edmonston B) (MeV).